Consider the following 386-residue polypeptide: Na(+)/H(+) antiporter NhaA (386 aa).

A run of 11 helical transmembrane segments spans residues 10 to 30 (MGSASGILLFFFALLAIIFAN), 58 to 78 (LLHWINDGFMAVFFVLVGLEV), 94 to 114 (IFPAVAAIGGMIVPALIYYLI), 124 to 144 (GWAIPMATDIAFALGIVALLG), 154 to 174 (FLLALAIIDDLGAIVVIAVFF), 176 to 196 (EELSIQALSVAIVAIAGLITL), 199 to 219 (MKVGHLCAYLIFGLILWAAVL), 253 to 273 (ILTPWCSFFVLPLFAFANAGV), 283 to 303 (IFSTLPLGIALGLIVGKPLGV), 327 to 347 (VFAIAILCGIGFTMSMFLAGL), and 361 to 381 (LSRLGILLGSSVSAILGYLLL).

The protein belongs to the NhaA Na(+)/H(+) (TC 2.A.33) antiporter family.

Its subcellular location is the cell inner membrane. It carries out the reaction Na(+)(in) + 2 H(+)(out) = Na(+)(out) + 2 H(+)(in). Its function is as follows. Na(+)/H(+) antiporter that extrudes sodium in exchange for external protons. This Mannheimia succiniciproducens (strain KCTC 0769BP / MBEL55E) protein is Na(+)/H(+) antiporter NhaA.